Reading from the N-terminus, the 305-residue chain is MKHLLTLMEFAPHEVEYLLRVSREFKTRFLAGEIYTPLFPGRVLILYFEKHSTRTRLSLTSAAAQLGIQAVYTTPNELQIARGETVADTMRVISRYAAAVAARVYKHETLEEMARHSAIPVINALSDKHHPLQALADALTLWERAGRLHNVKIAFVGDVSNNVATSLAIIGAKLGWEVRLVGPKQLWNQRLVDELAEDAAKTGARIYFTDSINEVAGVDGVYTDVWVSMGFEKEAEERRRLLKPYQVNQRVMEIAGKKAVFLHCLPAHRGEEVTDDVIDGPQSAVWDQAENRMHTAKAVLAYLLK.

Residues 52–55 (STRT), Gln79, Arg103, and 130–133 (HPLQ) each bind carbamoyl phosphate. Residues Asn162, Asp224, and 228-229 (SM) contribute to the L-ornithine site. Carbamoyl phosphate is bound by residues 264 to 265 (CL) and Arg292.

This sequence belongs to the aspartate/ornithine carbamoyltransferase superfamily. OTCase family.

It is found in the cytoplasm. It catalyses the reaction carbamoyl phosphate + L-ornithine = L-citrulline + phosphate + H(+). It functions in the pathway amino-acid biosynthesis; L-arginine biosynthesis; L-arginine from L-ornithine and carbamoyl phosphate: step 1/3. Reversibly catalyzes the transfer of the carbamoyl group from carbamoyl phosphate (CP) to the N(epsilon) atom of ornithine (ORN) to produce L-citrulline. This is Ornithine carbamoyltransferase from Pyrobaculum aerophilum (strain ATCC 51768 / DSM 7523 / JCM 9630 / CIP 104966 / NBRC 100827 / IM2).